Reading from the N-terminus, the 533-residue chain is D-3-phosphoglycerate dehydrogenase (533 aa).

Position 2 is an N-acetylalanine (Ala-2). A Phosphoserine modification is found at Ser-14. N6-acetyllysine; alternate is present on Lys-21. Lys-21 is covalently cross-linked (Glycyl lysine isopeptide (Lys-Gly) (interchain with G-Cter in SUMO1); alternate). Lys-21 participates in a covalent cross-link: Glycyl lysine isopeptide (Lys-Gly) (interchain with G-Cter in SUMO2); alternate. N6-acetyllysine is present on Lys-58. NAD(+) contacts are provided by residues Thr-78, Arg-155 to Ile-156, Asp-175, Thr-207, Cys-234 to Arg-236, and Asp-260. Thr-78 bears the Phosphothreonine mark. Residue Arg-236 is part of the active site. Glu-265 is an active-site residue. The active-site Proton donor is the His-283. His-283–Ala-286 serves as a coordination point for NAD(+).

This sequence belongs to the D-isomer specific 2-hydroxyacid dehydrogenase family. Homotetramer.

The enzyme catalyses (2R)-3-phosphoglycerate + NAD(+) = 3-phosphooxypyruvate + NADH + H(+). It catalyses the reaction (R)-2-hydroxyglutarate + NAD(+) = 2-oxoglutarate + NADH + H(+). It carries out the reaction (S)-malate + NAD(+) = oxaloacetate + NADH + H(+). It participates in amino-acid biosynthesis; L-serine biosynthesis; L-serine from 3-phospho-D-glycerate: step 1/3. Its function is as follows. Catalyzes the reversible oxidation of 3-phospho-D-glycerate to 3-phosphonooxypyruvate, the first step of the phosphorylated L-serine biosynthesis pathway. Also catalyzes the reversible oxidation of 2-hydroxyglutarate to 2-oxoglutarate and the reversible oxidation of (S)-malate to oxaloacetate. The polypeptide is D-3-phosphoglycerate dehydrogenase (PHGDH) (Homo sapiens (Human)).